Consider the following 123-residue polypeptide: Large ribosomal subunit protein bL12 (123 aa).

This sequence belongs to the bacterial ribosomal protein bL12 family. In terms of assembly, homodimer. Part of the ribosomal stalk of the 50S ribosomal subunit. Forms a multimeric L10(L12)X complex, where L10 forms an elongated spine to which 2 to 4 L12 dimers bind in a sequential fashion. Binds GTP-bound translation factors.

Forms part of the ribosomal stalk which helps the ribosome interact with GTP-bound translation factors. Is thus essential for accurate translation. This is Large ribosomal subunit protein bL12 from Rhodopseudomonas palustris (strain BisB18).